Here is a 1902-residue protein sequence, read N- to C-terminus: Putative surface cell antigen sca1 (1902 aa).

Residues 1-28 (MNKLTEQHLLKKSRFLKYSLLASISVGA) form the signal peptide. 5 disordered regions span residues 140 to 273 (GIEK…TFVP), 420 to 485 (QGVF…SRTA), 707 to 729 (TTTTDESLRSDNNWKNSAPYSSS), 858 to 885 (NRRRKRDGETSKQRTVDQEGEFGHAWGN), and 1470 to 1548 (KSES…SDGD). Composition is skewed to polar residues over residues 146 to 159 (QSQNTYTPESTEQM) and 168 to 197 (TASSPTVSPASNSFITAPNTPNTTLTSPEH). A compositionally biased stretch (low complexity) spans 199-212 (TTAPGTPSSTPATP). Positions 225–238 (LGANTPPNINTNSK) are enriched in polar residues. The span at 246 to 264 (SSSGPQQQAVQSSSQVKSE) shows a compositional bias: low complexity. The span at 423–439 (FNKNKSSGGNARKSSAG) shows a compositional bias: polar residues. Basic and acidic residues predominate over residues 445 to 482 (KKQEAQKQLSEIKKQEKAIKTASDKAKEVAASAKKETS). The span at 863–874 (RDGETSKQRTVD) shows a compositional bias: basic and acidic residues. The span at 1491 to 1507 (LSSLPALASSNESALAL) shows a compositional bias: low complexity. The segment covering 1521-1538 (SSEDEESYDSGFEEEEET) has biased composition (acidic residues). The 285-residue stretch at 1618–1902 (ESHIKRGLWM…QGSVKLKVNL (285 aa)) folds into the Autotransporter domain.

It localises to the cell outer membrane. In Rickettsia conorii (strain ATCC VR-613 / Malish 7), this protein is Putative surface cell antigen sca1 (sca1).